The following is a 559-amino-acid chain: MATVKSDIEIARAAKKLPIIEIGAKLGIPAEDLAPYGHDKAKIGAQFIAALKDKPDGKLILVTAINPTPAGEGKTTTTVGLGDGLNRIGKKAIVCVREASLGPCFGVKGGAAGGGYAQVIPMEDINLHFTGDFHAVTSAHNLLAALIDNHIYWGNEENIDVRRITWRRAMDMNDRALRDIVASLGGVANGYPREGGFDITVASEVMAILCLASDLKDLEKRLGDIIIGYRRDRTPVYARDLKADGAMAVLLKDAMQPNLVQTLENNPALVHGGPFANIAHGCNSVIATRTALKLADYVVTEAGFGADLGAEKFFDIKCRKAGLAPDAAVIVATVRALKMNGGVKKDDLGQENVEALVKGCANLGRHLANVRKFGVPVVVAINHFVSDTNAEIEAVKNYVARLGAEAILCRHWAEGSAGIEELAYKVVELAESGQAKFQPLYPDNLPLLEKIEIVASKIYHAGEVTADKAVRDQLRSWEDQGYGYLPVCMAKTQYSFSTDPNVRGAPEGHIVQVREVRLSAGAGFVVVITGEIMTMPGLPKAPAAERIFLNDQGYIEGLF.

T68–T75 lines the ATP pocket.

It belongs to the formate--tetrahydrofolate ligase family.

It catalyses the reaction (6S)-5,6,7,8-tetrahydrofolate + formate + ATP = (6R)-10-formyltetrahydrofolate + ADP + phosphate. It participates in one-carbon metabolism; tetrahydrofolate interconversion. This chain is Formate--tetrahydrofolate ligase, found in Rhizobium rhizogenes (strain K84 / ATCC BAA-868) (Agrobacterium radiobacter).